A 321-amino-acid chain; its full sequence is uncharacterized protein (321 aa).

The protein belongs to the NAD(P)-dependent epimerase/dehydratase family.

This is an uncharacterized protein from Staphylococcus aureus (strain MRSA252).